Consider the following 153-residue polypeptide: Partner of bursicon (153 aa).

A signal peptide spans 1–35 (MCNSVRTALAASNCCSIVLCCVLLLTLTLTVAVTA). Intrachain disulfides connect Cys-44/Cys-102, Cys-68/Cys-117, Cys-77/Cys-143, Cys-81/Cys-145, and Cys-99/Cys-148. The CTCK domain maps to 44–139 (CETLPSEIHL…SATMEIRLKE (96 aa)).

In terms of assembly, heterodimer of burs and pburs.

It localises to the secreted. Functionally, final heterodimeric neurohormone released at the end of the molting cycle, involved in the sclerotization (tanning) of the insect cuticle, melanization and wing spreading. In Anopheles gambiae (African malaria mosquito), this protein is Partner of bursicon.